The chain runs to 193 residues: Superoxide dismutase [Fe] (193 aa).

Residues H27, H74, D157, and H161 each coordinate Fe cation.

This sequence belongs to the iron/manganese superoxide dismutase family. In terms of assembly, homodimer. Requires Fe cation as cofactor.

It carries out the reaction 2 superoxide + 2 H(+) = H2O2 + O2. In terms of biological role, destroys superoxide anion radicals which are normally produced within the cells and which are toxic to biological systems. Partially complements double sodA-sodB deletions in E.coli. The chain is Superoxide dismutase [Fe] from Pseudomonas aeruginosa (strain ATCC 15692 / DSM 22644 / CIP 104116 / JCM 14847 / LMG 12228 / 1C / PRS 101 / PAO1).